The following is a 299-amino-acid chain: Probable 3-hydroxyisobutyrate dehydrogenase-like 2, mitochondrial (299 aa).

NAD(+) contacts are provided by residues 14–43 and Ser-108; that span reads TRIG…TVYA. Lys-182 is an active-site residue. An NAD(+)-binding site is contributed by Lys-250.

It belongs to the HIBADH-related family. 3-hydroxyisobutyrate dehydrogenase subfamily.

The protein localises to the mitochondrion. It carries out the reaction 3-hydroxy-2-methylpropanoate + NAD(+) = 2-methyl-3-oxopropanoate + NADH + H(+). It functions in the pathway amino-acid degradation; L-valine degradation. The polypeptide is Probable 3-hydroxyisobutyrate dehydrogenase-like 2, mitochondrial (Arabidopsis thaliana (Mouse-ear cress)).